The following is a 400-amino-acid chain: Exodeoxyribonuclease 7 large subunit (400 aa).

This sequence belongs to the XseA family. In terms of assembly, heterooligomer composed of large and small subunits.

The protein localises to the cytoplasm. It carries out the reaction Exonucleolytic cleavage in either 5'- to 3'- or 3'- to 5'-direction to yield nucleoside 5'-phosphates.. Its function is as follows. Bidirectionally degrades single-stranded DNA into large acid-insoluble oligonucleotides, which are then degraded further into small acid-soluble oligonucleotides. In Clostridium perfringens (strain ATCC 13124 / DSM 756 / JCM 1290 / NCIMB 6125 / NCTC 8237 / Type A), this protein is Exodeoxyribonuclease 7 large subunit.